A 545-amino-acid polypeptide reads, in one-letter code: Chaperonin GroEL (545 aa).

Residues 29-32 (TIGP), 86-90 (DGTTT), glycine 413, 478-480 (NAA), and aspartate 494 contribute to the ATP site.

The protein belongs to the chaperonin (HSP60) family. Forms a cylinder of 14 subunits composed of two heptameric rings stacked back-to-back. Interacts with the co-chaperonin GroES.

The protein resides in the cytoplasm. The enzyme catalyses ATP + H2O + a folded polypeptide = ADP + phosphate + an unfolded polypeptide.. Together with its co-chaperonin GroES, plays an essential role in assisting protein folding. The GroEL-GroES system forms a nano-cage that allows encapsulation of the non-native substrate proteins and provides a physical environment optimized to promote and accelerate protein folding. This is Chaperonin GroEL from Exiguobacterium sibiricum (strain DSM 17290 / CCUG 55495 / CIP 109462 / JCM 13490 / 255-15).